The primary structure comprises 103 residues: UPF0145 protein PBPRB0184 (103 aa).

This sequence belongs to the UPF0145 family.

This chain is UPF0145 protein PBPRB0184, found in Photobacterium profundum (strain SS9).